A 154-amino-acid chain; its full sequence is SsrA-binding protein (154 aa).

This sequence belongs to the SmpB family.

It is found in the cytoplasm. Functionally, required for rescue of stalled ribosomes mediated by trans-translation. Binds to transfer-messenger RNA (tmRNA), required for stable association of tmRNA with ribosomes. tmRNA and SmpB together mimic tRNA shape, replacing the anticodon stem-loop with SmpB. tmRNA is encoded by the ssrA gene; the 2 termini fold to resemble tRNA(Ala) and it encodes a 'tag peptide', a short internal open reading frame. During trans-translation Ala-aminoacylated tmRNA acts like a tRNA, entering the A-site of stalled ribosomes, displacing the stalled mRNA. The ribosome then switches to translate the ORF on the tmRNA; the nascent peptide is terminated with the 'tag peptide' encoded by the tmRNA and targeted for degradation. The ribosome is freed to recommence translation, which seems to be the essential function of trans-translation. This is SsrA-binding protein from Staphylococcus saprophyticus subsp. saprophyticus (strain ATCC 15305 / DSM 20229 / NCIMB 8711 / NCTC 7292 / S-41).